The chain runs to 286 residues: Secretory carrier-associated membrane protein 2 (286 aa).

Composition is skewed to basic and acidic residues over residues Met1–Phe10 and Ser54–Lys63. Positions Met1–Lys63 are disordered. At Met1–Ser126 the chain is on the cytoplasmic side. Positions Leu52–Ala89 form a coiled coil. The next 4 membrane-spanning stretches (helical) occupy residues Ser127–Ile147, Val152–Leu172, Phe189–Ala209, and Ile237–Ile257. The Cytoplasmic segment spans residues Gln258–Phe286.

The protein belongs to the SCAMP family.

It localises to the cell membrane. It is found in the cytoplasmic vesicle. Its subcellular location is the secretory vesicle membrane. In terms of biological role, probably involved in membrane trafficking. This is Secretory carrier-associated membrane protein 2 (SCAMP2) from Oryza sativa subsp. japonica (Rice).